The chain runs to 93 residues: UPF0728 protein C10orf53 homolog (93 aa).

This sequence belongs to the UPF0728 family.

This is UPF0728 protein C10orf53 homolog from Xenopus tropicalis (Western clawed frog).